Here is a 608-residue protein sequence, read N- to C-terminus: 2',5'-phosphodiesterase 12 (608 aa).

The transit peptide at 1–16 directs the protein to the mitochondrion; sequence MWRLPGRSALRGVRSV. The segment covering 90–99 has biased composition (basic residues); it reads AAKKSRKNRA. The interval 90-111 is disordered; sequence AAKKSRKNRAHSSGGAACEATG. At S216 the chain carries Phosphoserine. Mg(2+)-binding residues include E350, D495, and N497. The active-site Proton donor/acceptor is the D495.

The protein belongs to the CCR4/nocturin family. It depends on Mg(2+) as a cofactor.

It is found in the mitochondrion matrix. The enzyme catalyses Exonucleolytic cleavage of poly(A) to 5'-AMP.. Its function is as follows. Enzyme that cleaves 2',5'-phosphodiester bond linking adenosines of the 5'-triphosphorylated oligoadenylates, triphosphorylated oligoadenylates referred as 2-5A modulates the 2-5A system. Degrades triphosphorylated 2-5A to produce AMP and ATP. Also cleaves 3',5'-phosphodiester bond of oligoadenylates. Plays a role as a negative regulator of the 2-5A system that is one of the major pathways for antiviral and antitumor functions induced by interferons (IFNs). Suppression of this enzyme increases cellular 2-5A levels and decreases viral replication in cultured small-airway epithelial cells. In Mus musculus (Mouse), this protein is 2',5'-phosphodiesterase 12 (Pde12).